The sequence spans 573 residues: Protein FAM200A (573 aa).

Residues 1–51 are disordered; the sequence is MTPESRDTTDLSPRGTQEMEGIVVVKVEEEDEEDHFQKQRNKVESSPQVLS. Residues 1-513 are Extracellular-facing; sequence MTPESRDTTD…DEFPLLSRKS (513 aa). A helical membrane pass occupies residues 514–533; sequence ISLLLPFTTTYLCELGFSIL. The Cytoplasmic portion of the chain corresponds to 534–573; that stretch reads TRLKTKKRNRLNSAPDMRVALSSCVPDWKELMNRQAHPSH.

It belongs to the FAM200 family.

It localises to the membrane. The sequence is that of Protein FAM200A (FAM200A) from Macaca fascicularis (Crab-eating macaque).